The primary structure comprises 208 residues: MKIVEVKHPLVKHKLGLMRENDISTKRFRELASEVGSLLTYEATADLETETVTIDGWNGPVEIEQIKGKKITVVPILRAGLGMMEGVLEHVPSARISVVGIYRNEETLEPVPYFQKLVSNIDERMALVVDPMLATGGSMIATIDLLKNAGCHSIKVLVLVAAPEGIAALEKAHPDVELYTASIDKGLNEHGYIIPGLGDAGDKIFGTK.

Residues R78, R103, and 130–138 each bind 5-phospho-alpha-D-ribose 1-diphosphate; that span reads DPMLATGGS. Uracil is bound by residues I193 and 198-200; that span reads GDA. A 5-phospho-alpha-D-ribose 1-diphosphate-binding site is contributed by D199.

Belongs to the UPRTase family. It depends on Mg(2+) as a cofactor.

The enzyme catalyses UMP + diphosphate = 5-phospho-alpha-D-ribose 1-diphosphate + uracil. It participates in pyrimidine metabolism; UMP biosynthesis via salvage pathway; UMP from uracil: step 1/1. Its activity is regulated as follows. Allosterically activated by GTP. Its function is as follows. Catalyzes the conversion of uracil and 5-phospho-alpha-D-ribose 1-diphosphate (PRPP) to UMP and diphosphate. The chain is Uracil phosphoribosyltransferase from Citrobacter koseri (strain ATCC BAA-895 / CDC 4225-83 / SGSC4696).